The following is a 101-amino-acid chain: MMLEHVLVLSAYLFSIGIYGLITSRNMVRALMCLELILNAVNMNLVTFSDLFDSRQLKGDIFSIFVIAIAAAEAAIGPAIVSSIHRNRKSTRINQSNLLNK.

The next 3 helical transmembrane spans lie at 2-22 (MLEH…YGLI), 32-52 (MCLE…SDLF), and 61-81 (IFSI…PAIV).

Belongs to the complex I subunit 4L family. In terms of assembly, NDH is composed of at least 16 different subunits, 5 of which are encoded in the nucleus.

It localises to the plastid. The protein resides in the chloroplast thylakoid membrane. The catalysed reaction is a plastoquinone + NADH + (n+1) H(+)(in) = a plastoquinol + NAD(+) + n H(+)(out). The enzyme catalyses a plastoquinone + NADPH + (n+1) H(+)(in) = a plastoquinol + NADP(+) + n H(+)(out). Its function is as follows. NDH shuttles electrons from NAD(P)H:plastoquinone, via FMN and iron-sulfur (Fe-S) centers, to quinones in the photosynthetic chain and possibly in a chloroplast respiratory chain. The immediate electron acceptor for the enzyme in this species is believed to be plastoquinone. Couples the redox reaction to proton translocation, and thus conserves the redox energy in a proton gradient. The protein is NAD(P)H-quinone oxidoreductase subunit 4L, chloroplastic of Chloranthus spicatus (Chulantree).